Here is a 573-residue protein sequence, read N- to C-terminus: Protein phosphatase EYA3 (573 aa).

Position 1 is an N-acetylmethionine (Met1). 2 disordered regions span residues 1–46 (MEEE…LASN) and 236–296 (TYQS…DATS). Positions 20-46 (SGEQTISQVSNPDVSDQKPETSSLASN) are enriched in polar residues. Residues 254–271 (LSSGDPSTSPSLSQTTPS) show a composition bias toward low complexity. A phosphoserine mark is found at Ser262 and Ser266. Residue Asp309 is the Nucleophile of the active site. 2 residues coordinate Mg(2+): Asp309 and Asp311. The Proton donor role is filled by Asp311. Phosphoserine is present on residues Ser438 and Ser472. Residue Asp537 coordinates Mg(2+).

Belongs to the HAD-like hydrolase superfamily. EYA family. Interacts with SIX1 and DACH1, and probably SIX2, SIX4, SIX5. Mg(2+) is required as a cofactor. Ser-266 phosphorylation is required for localization at sites of DNA damage and directing interaction with H2AX.

It is found in the cytoplasm. It localises to the nucleus. It carries out the reaction O-phospho-L-tyrosyl-[protein] + H2O = L-tyrosyl-[protein] + phosphate. Its function is as follows. Tyrosine phosphatase that specifically dephosphorylates 'Tyr-142' of histone H2AX (H2AXY142ph). 'Tyr-142' phosphorylation of histone H2AX plays a central role in DNA repair and acts as a mark that distinguishes between apoptotic and repair responses to genotoxic stress. Promotes efficient DNA repair by dephosphorylating H2AX, promoting the recruitment of DNA repair complexes containing MDC1. Its function as histone phosphatase probably explains its role in transcription regulation during organogenesis. Coactivates SIX1, and seems to coactivate SIX2, SIX4 and SIX5. The repression of precursor cell proliferation in myoblasts by SIX1 is switched to activation through recruitment of EYA3 to the SIX1-DACH1 complex and seems to be dependent on EYA3 phosphatase activity. May be involved in development of the eye. This is Protein phosphatase EYA3 (EYA3) from Homo sapiens (Human).